The following is a 197-amino-acid chain: Ribonuclease HII (197 aa).

The region spanning 7 to 197 (LGIAGVDEVG…SFLRKLFATV (191 aa)) is the RNase H type-2 domain. Positions 13, 14, and 109 each coordinate a divalent metal cation.

Belongs to the RNase HII family. Mn(2+) serves as cofactor. Requires Mg(2+) as cofactor.

It localises to the cytoplasm. It catalyses the reaction Endonucleolytic cleavage to 5'-phosphomonoester.. Its function is as follows. Endonuclease that specifically degrades the RNA of RNA-DNA hybrids. In Synechococcus sp. (strain CC9311), this protein is Ribonuclease HII.